Consider the following 546-residue polypeptide: CTP synthase (546 aa).

Residues 1–269 form an amidoligase domain region; it reads MADTKYIFVT…DKVTLKKLAL (269 aa). Ser15 is a CTP binding site. Ser15 provides a ligand contact to UTP. Position 16–21 (16–21) interacts with ATP; it reads SLGKGI. Tyr56 contributes to the L-glutamine binding site. Asp73 serves as a coordination point for ATP. Residues Asp73 and Glu143 each contribute to the Mg(2+) site. Residues 150–152, 190–195, and Lys226 each bind CTP; these read DIE and KTKPTQ. Residues 190 to 195 and Lys226 each bind UTP; that span reads KTKPTQ. Residues 295–537 form the Glutamine amidotransferase type-1 domain; it reads HIGLIGKYVE…VKAAHEHSVK (243 aa). Gly357 contributes to the L-glutamine binding site. The active-site Nucleophile; for glutamine hydrolysis is Cys384. Residues 385-388, Glu408, and Arg465 contribute to the L-glutamine site; that span reads LGMQ. Residues His510 and Glu512 contribute to the active site.

Belongs to the CTP synthase family. As to quaternary structure, homotetramer.

The catalysed reaction is UTP + L-glutamine + ATP + H2O = CTP + L-glutamate + ADP + phosphate + 2 H(+). It catalyses the reaction L-glutamine + H2O = L-glutamate + NH4(+). It carries out the reaction UTP + NH4(+) + ATP = CTP + ADP + phosphate + 2 H(+). The protein operates within pyrimidine metabolism; CTP biosynthesis via de novo pathway; CTP from UDP: step 2/2. With respect to regulation, allosterically activated by GTP, when glutamine is the substrate; GTP has no effect on the reaction when ammonia is the substrate. The allosteric effector GTP functions by stabilizing the protein conformation that binds the tetrahedral intermediate(s) formed during glutamine hydrolysis. Inhibited by the product CTP, via allosteric rather than competitive inhibition. Its function is as follows. Catalyzes the ATP-dependent amination of UTP to CTP with either L-glutamine or ammonia as the source of nitrogen. Regulates intracellular CTP levels through interactions with the four ribonucleotide triphosphates. The polypeptide is CTP synthase (Christiangramia forsetii (strain DSM 17595 / CGMCC 1.15422 / KT0803) (Gramella forsetii)).